Consider the following 257-residue polypeptide: Small ribosomal subunit protein uS2 (257 aa).

Residues 229–257 (QFTPATTSSQEVDKASEQVEIAADDIDEE) form a disordered region.

The protein belongs to the universal ribosomal protein uS2 family.

The chain is Small ribosomal subunit protein uS2 from Caldicellulosiruptor bescii (strain ATCC BAA-1888 / DSM 6725 / KCTC 15123 / Z-1320) (Anaerocellum thermophilum).